Here is a 201-residue protein sequence, read N- to C-terminus: ATP-dependent Clp protease proteolytic subunit 2 (201 aa).

S100 acts as the Nucleophile in catalysis. H125 is a catalytic residue.

The protein belongs to the peptidase S14 family. Fourteen ClpP subunits assemble into 2 heptameric rings which stack back to back to give a disk-like structure with a central cavity, resembling the structure of eukaryotic proteasomes.

Its subcellular location is the cytoplasm. The enzyme catalyses Hydrolysis of proteins to small peptides in the presence of ATP and magnesium. alpha-casein is the usual test substrate. In the absence of ATP, only oligopeptides shorter than five residues are hydrolyzed (such as succinyl-Leu-Tyr-|-NHMec, and Leu-Tyr-Leu-|-Tyr-Trp, in which cleavage of the -Tyr-|-Leu- and -Tyr-|-Trp bonds also occurs).. Its function is as follows. Cleaves peptides in various proteins in a process that requires ATP hydrolysis. Has a chymotrypsin-like activity. Plays a major role in the degradation of misfolded proteins. The sequence is that of ATP-dependent Clp protease proteolytic subunit 2 from Corynebacterium glutamicum (strain ATCC 13032 / DSM 20300 / JCM 1318 / BCRC 11384 / CCUG 27702 / LMG 3730 / NBRC 12168 / NCIMB 10025 / NRRL B-2784 / 534).